A 277-amino-acid chain; its full sequence is Large ribosomal subunit protein uL2 (277 aa).

Positions 222-277 (GVAMNPVDHPHGGGEGRTSGGRHPVSPWGKPTKGKRTRSNKATDKFIMRTRHQRKK) are disordered.

It belongs to the universal ribosomal protein uL2 family. Part of the 50S ribosomal subunit. Forms a bridge to the 30S subunit in the 70S ribosome.

In terms of biological role, one of the primary rRNA binding proteins. Required for association of the 30S and 50S subunits to form the 70S ribosome, for tRNA binding and peptide bond formation. It has been suggested to have peptidyltransferase activity; this is somewhat controversial. Makes several contacts with the 16S rRNA in the 70S ribosome. This Bartonella tribocorum (strain CIP 105476 / IBS 506) protein is Large ribosomal subunit protein uL2.